Consider the following 551-residue polypeptide: uncharacterized protein (551 aa).

At 1–7 the chain is on the cytoplasmic side; that stretch reads MKKNSSV. A helical transmembrane segment spans residues 8-28; it reads VFFLVGLSQFVTMAFLIIGSI. Residues 29–88 lie on the Vacuolar side of the membrane; that stretch reads TAPIFKQIGYSKYDEITYGTFGYCKEGSCSKASYNYHPDELSDSDSNWKLNSNARSILGK. The chain crosses the membrane as a helical span at residues 89–109; the sequence is IIFITPIAAGLNFLGFLCTIM. Over 110–135 the chain is Cytoplasmic; that stretch reads SVLLINVLSSDRVGSASAIMFFVNLT. Residues 136–156 traverse the membrane as a helical segment; it reads FSTLGFLSASLICIVVFLLFY. The Vacuolar segment spans residues 157–160; sequence PHVT. Residues 161-181 form a helical membrane-spanning segment; sequence WCSWVLIPGAALSLLVIPLIF. The Cytoplasmic segment spans residues 182-551; it reads SAYSRSSGSR…TSLNNPYGFR (370 aa). Residues S224 and S232 each carry the phosphoserine modification. Residues 280-341 are disordered; sequence AKDMENSNGS…NGSNTSNNIN (62 aa). A compositionally biased stretch (polar residues) spans 307 to 320; it reads TSTYSVIESESGLK. The span at 321-341 shows a compositional bias: low complexity; it reads NGSVSNNYVRNNGSNTSNNIN. A Phosphoserine modification is found at S363.

Forms homo dimers or homooligomers in MCC microdomains. Interacts with BOI2 and RHO3, two key regulators of secretion.

The protein localises to the vacuole membrane. It localises to the cell membrane. Functionally, protein involved in secretion and cell wall organization. Contributes to cell surface-related functions as a auxiliary component of MCC/eisosome that specifically interacts with the secretory pathway. This is an uncharacterized protein from Saccharomyces cerevisiae (strain ATCC 204508 / S288c) (Baker's yeast).